Reading from the N-terminus, the 1088-residue chain is Pathogenesis-related homeodomain protein (1088 aa).

Repeat copies occupy residues 140–152, 173–199, 205–239, 240–274, 283–295, 316–342, 348–382, and 383–417. The interval 140–295 is 2 X 13 AA repeats; that stretch reads INMGQKETMP…EQKETIPEQV (156 aa). The tract at residues 173 to 342 is 2 X 27 AA approximate repeats; it reads NSYQSGLPPE…HAQFGHQSDD (170 aa). Residues 205 to 274 are 2 X 35 AA approximate tandem repeats (type C); sequence GLVELVIGQK…SRGRPRKVQN (70 aa). The segment at 220-282 is disordered; the sequence is PSQLVETGKR…QNSPTSFLEN (63 aa). 2 DNA-binding regions (a.T hook) span residues 226-236 and 261-271; these read TGKRGRGRPRK and TGKRSRGRPRK. Residues 272 to 282 show a composition bias toward polar residues; sequence VQNSPTSFLEN. A compositionally biased stretch (polar residues) spans 303–320; sequence SLTIPTDNQSRTYNSDQS. Disordered stretches follow at residues 303-343 and 363-484; these read SLTI…SDDT and PSQL…RMEE. The tract at residues 348-417 is 2 X 35 AA approximate tandem repeats (type C); sequence GFKELVIGQE…SRGRPRKVQD (70 aa). 2 consecutive DNA-binding regions (a.T hook) follow at residues 369-379 and 404-414; these read AGKRGRGRPRK and TGKRSRGRPRK. The PHD-type zinc finger occupies 578–635; sequence DIFCAKCGSKDVTLSNDIILCDGACDRGFHQFCLDPPLLKEYIPPDDEGWLCPGCECK. Disordered stretches follow at residues 667-810 and 851-901; these read AASG…PLYP and EEYG…ARES. Residues 678-693 form a 4-1 repeat; sequence GLPSDDSEDDDYDPGG. Positions 678–744 are 2 X 16 AA Asp/Glu-rich (acidic) repeats; it reads GLPSDDSEDD…SEDDEYDPSG (67 aa). Residues 705 to 718 are compositionally biased toward acidic residues; sequence SSTDESDYQSESDD. The 4-2 repeat unit spans residues 729–744; that stretch reads GLPSDDSEDDEYDPSG. Composition is skewed to basic and acidic residues over residues 788 to 802 and 874 to 901; these read DHVR…HPEQ and NNSD…ARES. The homeobox DNA-binding region spans 935-994; sequence KSTSKTLHGEHATQRLLQSFKENQYPQRAVKESLAAELALSVRQVSNWFNNRRWSFRHSS.

It belongs to the PHD-associated homeobox family.

The protein resides in the nucleus. Specifically binds to the fungal elicitor-responsive DNA element, 5'-CTAATTGTTTA-3', of the gene PR2 promoter. In Petroselinum crispum (Parsley), this protein is Pathogenesis-related homeodomain protein (PRH).